The following is a 223-amino-acid chain: Putative synaptogyrin-2 like protein (223 aa).

M1 carries the N-acetylmethionine modification. S3 carries the phosphoserine modification. Positions F20–K170 constitute an MARVEL domain. A run of 4 helical transmembrane segments spans residues V26–E46, G71–F91, V104–F124, and A146–Y166. Residues A197–Y223 are disordered. Positions D200–G216 are enriched in polar residues.

This sequence belongs to the synaptogyrin family.

It localises to the membrane. This chain is Putative synaptogyrin-2 like protein, found in Homo sapiens (Human).